A 694-amino-acid chain; its full sequence is Nuclear factor erythroid 2-related factor 3 (694 aa).

The span at 133 to 150 shows a compositional bias: low complexity; the sequence is ASSTGGAGASVDGGSQAV. Disordered regions lie at residues 133-256 and 330-357; these read ASST…LNGT and DPTARTSQSQEPFLQLNSHTTNPEQTLP. Composition is skewed to basic and acidic residues over residues 193-217 and 231-254; these read GVLREKHEAVDHSSQHEENEERVSA and NKIAEKPDWEAEKTTESRNERHLN. Over residues 333–357 the composition is skewed to polar residues; sequence ARTSQSQEPFLQLNSHTTNPEQTLP. In terms of domain architecture, bZIP spans 578 to 641; that stretch reads LIRDIRRRGK…NIMKQKLHDL (64 aa). The basic motif stretch occupies residues 580-599; the sequence is RDIRRRGKNKVAAQNCRKRK. Positions 606 to 620 are leucine-zipper; that stretch reads LEDDVCNLQAKKETL.

The protein belongs to the bZIP family. CNC subfamily. Heterodimer with MAFG, MAFK and other small MAF proteins that binds to the MAF recognition elements (MARE). Highly expressed in human placenta and also in B-cell and monocyte cell lines. Low expression in heart, brain, lung, skeletal muscle, kidney and pancreas.

The protein resides in the nucleus. In terms of biological role, activates erythroid-specific, globin gene expression. This Homo sapiens (Human) protein is Nuclear factor erythroid 2-related factor 3 (NFE2L3).